We begin with the raw amino-acid sequence, 517 residues long: ATP synthase subunit alpha 1 (517 aa).

Residue 176–183 (GDRQTGKT) participates in ATP binding.

The protein belongs to the ATPase alpha/beta chains family. F-type ATPases have 2 components, CF(1) - the catalytic core - and CF(0) - the membrane proton channel. CF(1) has five subunits: alpha(3), beta(3), gamma(1), delta(1), epsilon(1). CF(0) has three main subunits: a(1), b(2) and c(9-12). The alpha and beta chains form an alternating ring which encloses part of the gamma chain. CF(1) is attached to CF(0) by a central stalk formed by the gamma and epsilon chains, while a peripheral stalk is formed by the delta and b chains.

The protein resides in the cell inner membrane. The catalysed reaction is ATP + H2O + 4 H(+)(in) = ADP + phosphate + 5 H(+)(out). Its function is as follows. Produces ATP from ADP in the presence of a proton gradient across the membrane. The alpha chain is a regulatory subunit. The protein is ATP synthase subunit alpha 1 of Shewanella frigidimarina (strain NCIMB 400).